The chain runs to 70 residues: Alpha-conotoxin EIIB (70 aa).

The N-terminal stretch at 1–21 is a signal peptide; that stretch reads MGMRMMFIVFLLVVLATTVVS. Positions 22-51 are excised as a propeptide; the sequence is FTLDHVLGLASEGRNAKAIDNALDQRDPKR. Residue Gln-52 is modified to Pyrrolidone carboxylic acid. A Hydroxyproline modification is found at Pro-54. Cystine bridges form between Cys-56/Cys-62 and Cys-57/Cys-67. Cys-67 carries the cysteine amide modification.

As to expression, expressed by the venom duct.

It is found in the secreted. Its function is as follows. Alpha-conotoxins bind to the nicotinic acetylcholine receptors (nAChR) and inhibit them. This peptide potently blocks muscular nicotinic acetylcholine receptor (CHRNA1-CHRNB1-CHRNG-CHRND), and has no effect on neuronal receptors. It is able to totally displace [125I]-Bgtx from the Torpedo receptor with an inhibition constant (Ki) of 2.2 and 0.7 nM. The sequence is that of Alpha-conotoxin EIIB from Conus ermineus (Agate cone).